Reading from the N-terminus, the 1025-residue chain is Rho GTPase-activating protein Graf (1025 aa).

The PH domain maps to Ile-271–Pro-388. A Rho-GAP domain is found at Tyr-402–Phe-589. Positions Gly-824–Ser-866 are disordered. Residues Thr-854 to Ser-866 are compositionally biased toward low complexity. The region spanning Thr-963 to Pro-1023 is the SH3 domain.

Interacts with Egfr (when ubiquitinated). In the adult brain, expressed in the antennal lobe, the subesophageal ganglion and the alpha/beta neurons of the mushroom body.

The protein resides in the cytoplasm. It localises to the cytosol. Its subcellular location is the cytoplasmic vesicle. Its function is as follows. GTPase-activating protein for Rho family proteins. Essential component of the CLIC (clathrin-independent carrier)/GEEC (GPI-anchored protein-enriched early endocytic compartment) endocytic pathway. During hematopoiesis, inhibits Egfr-ras-MAPK signaling by promoting Spi-induced Egfr internalization through CLIC/GEEC endocytosis, thereby preventing plasmatocyte overproliferation. Essential for normal mushroom body (MB) development and consequently the formation of olfactory long-term memories. During MD development, required to stop the MB beta-lobe from crossing the brain midline, possibly acting via its role in the CLIC/GEEC endocytic pathway to down-regulate the Egfr-ras-MAPK signaling at the tip of the beta-lobes. Required during embryo cellularization for maintaining and regulating the rate of actomyosin ring constriction. During cellularization, inhibits Rho-GTP levels at the furrow canal tip in a spatiotemporal manner, thus delaying the onset of actomyosin contraction and ensuring appropriate closure of the cells at the base of nuclei after membrane extension. The sequence is that of Rho GTPase-activating protein Graf from Drosophila melanogaster (Fruit fly).